The following is a 360-amino-acid chain: MSLTRLNIEAFRNIQSAQLIPAPGINLIYGQNGSGKTSILEAIYFLGMGRSFRSHLSQRVINNDDDKLTLFATLNLARGDSKIGLRRFRSGETEVRIDGEKVKRLSTLAETLPIQVITPESFSLLFEGPKSRRQFIDWGAFHADPQFYGAWTNVRRVLKQRNQLLRNGSSYSNIQFWDQEFVRYAEQVTEIRNHYVDSLNELLKGIIGEFLPSVDVKVSFTRGWDSKTDFAELLENQYSRDLATGHTVSGPHKADLRLRVGTLPAQDALSRGQLKLLVCALRIAQGKLLKQQIDKHSIYLVDDLPSELDAQHRQLLLKQLTDTGAQVFVTAIDPAAIVDSLHTPPSRMFHVEQGRVTVIE.

ATP is bound at residue 30-37 (GQNGSGKT).

Belongs to the RecF family.

The protein localises to the cytoplasm. The RecF protein is involved in DNA metabolism; it is required for DNA replication and normal SOS inducibility. RecF binds preferentially to single-stranded, linear DNA. It also seems to bind ATP. The polypeptide is DNA replication and repair protein RecF (Shewanella baltica (strain OS223)).